The chain runs to 80 residues: Exodeoxyribonuclease 7 small subunit (80 aa).

Belongs to the XseB family. Heterooligomer composed of large and small subunits.

It localises to the cytoplasm. The enzyme catalyses Exonucleolytic cleavage in either 5'- to 3'- or 3'- to 5'-direction to yield nucleoside 5'-phosphates.. Its function is as follows. Bidirectionally degrades single-stranded DNA into large acid-insoluble oligonucleotides, which are then degraded further into small acid-soluble oligonucleotides. In Cronobacter sakazakii (strain ATCC BAA-894) (Enterobacter sakazakii), this protein is Exodeoxyribonuclease 7 small subunit.